The following is a 142-amino-acid chain: gSG7 salivary protein (142 aa).

An N-terminal signal peptide occupies residues 1 to 26; that stretch reads MAVRMTVILPLAMALICLMQAEPATA. Cystine bridges form between Cys84-Cys139 and Cys107-Cys117.

Associates with activated host C3-convertase complex C3bBb (C3-CFB). Interacts with host properdin (CFP), a regulator of the alternate pathway of complement. Female salivary gland (at protein level).

Its subcellular location is the secreted. Functionally, salivary protein that potently inhibits the alternative pathway of complement system activation in the host while having no inhibitory effect on the classical or lectin pathways. Binds and stabilizes activated host C3-convertase complex C3bBb (C3-CFB) and inhibits its convertase activity. Enhances accumulation of C3bBb on immobilized properdin. In Anopheles albimanus (New world malaria mosquito), this protein is gSG7 salivary protein.